A 430-amino-acid chain; its full sequence is Probable protein phosphatase 1N (430 aa).

The interval 16–65 (CKKKEREKEGREEEEEEEAGRRAPEGPRSLLTAPRRAQRPHGGAEASGGL) is disordered. The segment covering 17 to 26 (KKKEREKEGR) has biased composition (basic and acidic residues). Residues 66–326 (RFGASAAQGW…DNMTCILVCF (261 aa)) form the PPM-type phosphatase domain. Asp103, Gly104, Asp274, and Asp317 together coordinate Mn(2+). A disordered region spans residues 407-430 (GEKGQDGAGKSNPTHLGSALDMEA).

This sequence belongs to the PP2C family. Mg(2+) is required as a cofactor. The cofactor is Mn(2+).

The enzyme catalyses O-phospho-L-seryl-[protein] + H2O = L-seryl-[protein] + phosphate. The catalysed reaction is O-phospho-L-threonyl-[protein] + H2O = L-threonyl-[protein] + phosphate. The sequence is that of Probable protein phosphatase 1N (PPM1N) from Homo sapiens (Human).